Consider the following 702-residue polypeptide: Vertnin (702 aa).

The tract at residues 562 to 625 is disordered; it reads VPTLGKGGQE…QGQPHSGPLL (64 aa). Residues 570–582 are compositionally biased toward basic and acidic residues; the sequence is QEAEEKQEKEAGR.

It belongs to the vertnin family.

The protein resides in the nucleus. Its function is as follows. Acts as a transcription factor that regulates development of thoracic vertebrae. The protein is Vertnin of Homo sapiens (Human).